A 652-amino-acid polypeptide reads, in one-letter code: Vitrin (652 aa).

An N-terminal signal peptide occupies residues Met1–Ser26. Residues Thr40–Phe133 enclose the LCCL domain. 2 cysteine pairs are disulfide-bonded: Cys46–Cys62 and Cys66–Cys86. Disordered regions lie at residues Glu137–Pro181 and Thr196–Leu231. Low complexity predominate over residues Thr145–Pro158. A compositionally biased stretch (polar residues) spans Thr196–Ser212. 2 consecutive VWFA domains span residues Asp267–Val452 and Asp469–Val638. An N-linked (GlcNAc...) asparagine glycan is attached at Asn494.

In terms of assembly, binds dermatan sulfate and chondroitin sulfate.

It localises to the secreted. The protein resides in the extracellular space. The protein localises to the extracellular matrix. Its function is as follows. Promotes matrix assembly and cell adhesiveness. Plays a role in spinal cord formation by regulating the proliferation and differentiation of neural stem cells. The chain is Vitrin (VIT) from Bos taurus (Bovine).